A 105-amino-acid polypeptide reads, in one-letter code: Met repressor (105 aa).

Belongs to the MetJ family. In terms of assembly, homodimer.

It localises to the cytoplasm. Its function is as follows. This regulatory protein, when combined with SAM (S-adenosylmethionine) represses the expression of the methionine regulon and of enzymes involved in SAM synthesis. This is Met repressor from Pectobacterium carotovorum subsp. carotovorum (strain PC1).